Consider the following 294-residue polypeptide: Acetylglutamate kinase (294 aa).

Substrate-binding positions include 69–70 (GG), arginine 91, and asparagine 190.

Belongs to the acetylglutamate kinase family. ArgB subfamily.

It localises to the cytoplasm. The enzyme catalyses N-acetyl-L-glutamate + ATP = N-acetyl-L-glutamyl 5-phosphate + ADP. It functions in the pathway amino-acid biosynthesis; L-arginine biosynthesis; N(2)-acetyl-L-ornithine from L-glutamate: step 2/4. Functionally, catalyzes the ATP-dependent phosphorylation of N-acetyl-L-glutamate. The chain is Acetylglutamate kinase from Mycobacterium tuberculosis (strain CDC 1551 / Oshkosh).